Reading from the N-terminus, the 171-residue chain is NADH-quinone oxidoreductase subunit B (171 aa).

Positions 34, 35, 99, and 128 each coordinate [4Fe-4S] cluster.

It belongs to the complex I 20 kDa subunit family. In terms of assembly, NDH-1 is composed of 14 different subunits. Subunits NuoB, C, D, E, F, and G constitute the peripheral sector of the complex. [4Fe-4S] cluster is required as a cofactor.

It is found in the cell inner membrane. The catalysed reaction is a quinone + NADH + 5 H(+)(in) = a quinol + NAD(+) + 4 H(+)(out). In terms of biological role, NDH-1 shuttles electrons from NADH, via FMN and iron-sulfur (Fe-S) centers, to quinones in the respiratory chain. The immediate electron acceptor for the enzyme in this species is believed to be ubiquinone. Couples the redox reaction to proton translocation (for every two electrons transferred, four hydrogen ions are translocated across the cytoplasmic membrane), and thus conserves the redox energy in a proton gradient. The protein is NADH-quinone oxidoreductase subunit B of Sulfurihydrogenibium sp. (strain YO3AOP1).